The chain runs to 89 residues: Small ribosomal subunit protein uS15 (89 aa).

It belongs to the universal ribosomal protein uS15 family. As to quaternary structure, part of the 30S ribosomal subunit. Forms a bridge to the 50S subunit in the 70S ribosome, contacting the 23S rRNA.

One of the primary rRNA binding proteins, it binds directly to 16S rRNA where it helps nucleate assembly of the platform of the 30S subunit by binding and bridging several RNA helices of the 16S rRNA. In terms of biological role, forms an intersubunit bridge (bridge B4) with the 23S rRNA of the 50S subunit in the ribosome. The polypeptide is Small ribosomal subunit protein uS15 (Prochlorococcus marinus (strain MIT 9312)).